The sequence spans 179 residues: ATP synthase subunit delta (179 aa).

This sequence belongs to the ATPase delta chain family. As to quaternary structure, F-type ATPases have 2 components, F(1) - the catalytic core - and F(0) - the membrane proton channel. F(1) has five subunits: alpha(3), beta(3), gamma(1), delta(1), epsilon(1). F(0) has three main subunits: a(1), b(2) and c(10-14). The alpha and beta chains form an alternating ring which encloses part of the gamma chain. F(1) is attached to F(0) by a central stalk formed by the gamma and epsilon chains, while a peripheral stalk is formed by the delta and b chains.

The protein localises to the cell inner membrane. Functionally, f(1)F(0) ATP synthase produces ATP from ADP in the presence of a proton or sodium gradient. F-type ATPases consist of two structural domains, F(1) containing the extramembraneous catalytic core and F(0) containing the membrane proton channel, linked together by a central stalk and a peripheral stalk. During catalysis, ATP synthesis in the catalytic domain of F(1) is coupled via a rotary mechanism of the central stalk subunits to proton translocation. In terms of biological role, this protein is part of the stalk that links CF(0) to CF(1). It either transmits conformational changes from CF(0) to CF(1) or is implicated in proton conduction. This Burkholderia cenocepacia (strain ATCC BAA-245 / DSM 16553 / LMG 16656 / NCTC 13227 / J2315 / CF5610) (Burkholderia cepacia (strain J2315)) protein is ATP synthase subunit delta.